The following is a 388-amino-acid chain: Alpha-2B adrenergic receptor (388 aa).

The helical transmembrane segment at 1 to 25 (AIAAVITFLILFTIFGNALVILAVL) threads the bilayer. The Cytoplasmic portion of the chain corresponds to 26 to 36 (TSRSLRAPQNL). A helical transmembrane segment spans residues 37 to 62 (FLVSLAAADILVATLIIPFSLANELL). Topologically, residues 63–72 (GYWYFRRTWC) are extracellular. A disulfide bridge connects residues cysteine 72 and cysteine 151. A helical transmembrane segment spans residues 73 to 95 (EVYLALDVLFCTSSIVHLCAISL). Residues 96-117 (DRYWAVSRALEYNSKRTPRXIK) are Cytoplasmic-facing. A helical membrane pass occupies residues 118 to 140 (CIILTVWLIAAAISLPPLIYKGD). The Extracellular portion of the chain corresponds to 141–156 (QGPQPRGRPQCKLNQE). The helical transmembrane segment at 157–180 (AWYILSSSIGSFFAPCLIMILVYL) threads the bilayer. Residues 181–352 (RIYVIAKRSN…LTREKRFTFV (172 aa)) are Cytoplasmic-facing. A disordered region spans residues 193–309 (GPRAKGASRE…ASACNPPLQQ (117 aa)). The span at 239–249 (PTGEKEGKTPE) shows a compositional bias: basic and acidic residues. Over residues 279 to 291 (PEEEAEEEEEECE) the composition is skewed to acidic residues. Residues 292–302 (PQAAPASSASA) show a composition bias toward low complexity. A helical transmembrane segment spans residues 353–376 (LAVVIGVFVLCWFPFFFSYSLGAI). Residues 377–385 (CPQRCKVPH) lie on the Extracellular side of the membrane. Residues 386–388 (GLF) form a helical membrane-spanning segment.

The protein belongs to the G-protein coupled receptor 1 family. Adrenergic receptor subfamily. ADRA2B sub-subfamily. As to quaternary structure, interacts with RAB26. Interacts with PPP1R9B.

It is found in the cell membrane. Alpha-2 adrenergic receptors mediate the catecholamine-induced inhibition of adenylate cyclase through the action of G proteins. This Orycteropus afer (Aardvark) protein is Alpha-2B adrenergic receptor (ADRA2B).